The sequence spans 96 residues: Protein CLAVATA 3 (96 aa).

An N-terminal signal peptide occupies residues 1–21; it reads MDSKSFLLLLLLFCFLFLHDA. The segment at 68–96 is disordered; the sequence is ELRTVPSGPDPLHHHVNPPRQPRNNFQLP. Hydroxyproline is present on residues P73 and P76. An O-linked (Ara...) hydroxyproline glycan is attached at P76.

The protein belongs to the CLV3/ESR signal peptide family. As to quaternary structure, interacts with the extracellular leucine-rich repeat region of CLV1. Interacts with CLV2. CLV3-derived CLE peptides interacts with a tetrameric complex made of two CLV2/CRN heterodimers. The MCLV3 peptide contains two hydroxyprolines, but hydroxylation had no direct effect on MCLV3 activity. Post-translationally, the O-glycosylation (arabinosylation) of the hydroxyproline P-76 enhances binding affinity of the MCLV3 peptide for its receptor. As to expression, first detected in heart stage embryos in a patch of cells between the developing cotyledons. In vegetative and inflorescence meristems, expressed in a small cone of cells at the meristem apex.

It localises to the secreted. The protein resides in the extracellular space. Its function is as follows. Extracellular signal that regulates meristem maintenance. Acts with CLV1 as a ligand-receptor pair in a signal transduction pathway coordinating growth between adjacent meristematic regions and controlling the balance between meristem cell proliferation and differentiation. The secreted peptide MCLV3 activates a signal transduction cascade to restrict WUSCHEL (WUS) expression, inducing shoot and root meristem consumption as cells differentiated into other organs. In Arabidopsis thaliana (Mouse-ear cress), this protein is Protein CLAVATA 3.